We begin with the raw amino-acid sequence, 2224 residues long: Protein sidekick (2224 aa).

Positions 1-47 are cleaved as a signal peptide; that stretch reads MLKSAASSLRRRRPKTTITATLAIEMPSQPKLASLLAVLVLLCYCDS. The Extracellular portion of the chain corresponds to 48–2001; sequence CFFCYADANL…LQHKPFYRQT (1954 aa). One can recognise an Ig-like C2-type 1 domain in the interval 72-155; that stretch reads PRFTTHPSSS…SIFSEKSDVV (84 aa). Cys95 and Cys138 are joined by a disulfide. N-linked (GlcNAc...) asparagine glycans are attached at residues Asn164, Asn250, Asn318, and Asn327. Ig-like C2-type domains are found at residues 261-355, 359-445, 455-541, and 546-636; these read PEII…ARLQ, PPLF…NSAS, PIME…AYLS, and TQII…ARLS. Intrachain disulfides connect Cys283-Cys336 and Cys382-Cys433. N-linked (GlcNAc...) asparagine glycosylation is found at Asn463, Asn485, and Asn491. Intrachain disulfides connect Cys476–Cys525 and Cys567–Cys620. Residues Asn628, Asn661, Asn707, Asn809, Asn870, Asn942, Asn1019, Asn1094, Asn1109, Asn1172, Asn1203, Asn1282, Asn1329, Asn1379, Asn1414, and Asn1420 are each glycosylated (N-linked (GlcNAc...) asparagine). 13 consecutive Fibronectin type-III domains span residues 643 to 753, 758 to 855, 860 to 967, 971 to 1065, 1069 to 1164, 1169 to 1270, 1275 to 1372, 1376 to 1469, 1474 to 1570, 1575 to 1677, 1682 to 1785, 1789 to 1883, and 1885 to 1984; these read PPSN…LPQE, PPVG…TKEG, PPTN…TMDD, EVTG…VEPV, APTA…TIQA, PPFN…TREA, GPLD…TFED, VPSN…TNNR, APSV…TLPA, GVGG…VGEA, EPRA…TLPG, APLH…GPQD, and SPVA…TPSK. N-linked (GlcNAc...) asparagine glycans are attached at residues Asn1843 and Asn1876. The helical transmembrane segment at 2002 to 2022 threads the bilayer; sequence WFMVSLAATSIVIIVMVIAVL. The Cytoplasmic portion of the chain corresponds to 2023–2224; that stretch reads CVKSKSYKYK…APLPGFSSFV (202 aa). Disordered stretches follow at residues 2068 to 2157 and 2171 to 2195; these read TLNS…RSDP and LRQS…PEGS. The residue at position 2071 (Ser2071) is a Phosphoserine. Residues 2073–2085 are compositionally biased toward low complexity; sequence GTLRSGTLGTLGR. The residue at position 2074 (Thr2074) is a Phosphothreonine. Basic and acidic residues-rich tracts occupy residues 2112–2122 and 2144–2157; these read HSDEESLKCYD and QHSE…RSDP. Ser2113 and Ser2117 each carry phosphoserine.

It belongs to the sidekick family.

It is found in the membrane. In terms of biological role, participates in homotypic or heterotypic interactions in the eye during pattern formation to prevent extra cells from joining the precluster and differentiating as photoreceptor cells. The polypeptide is Protein sidekick (Drosophila melanogaster (Fruit fly)).